The primary structure comprises 221 residues: MANVTLNVTDNQGKATGTVDAPAEIFGFSAEEVQSRIPLIHQVVIAQLAAARQGTHATKTRGMVSGGGRKPWKQKGTGRARQGSIRAPQWYHGGTVFGPQPRDYSQRTPKKMKAAALKYVLSDRANAGHVAVVDFGVSEAPSTKAAVAALTPVTENKFTTVVLSRENVNEWLSVRNIPTVHPIFADQLNTYDVVTAQYVVFSKEGFDAFLAAKAEPAAKEA.

Positions 56-83 (HATKTRGMVSGGGRKPWKQKGTGRARQG) are disordered.

Belongs to the universal ribosomal protein uL4 family. As to quaternary structure, part of the 50S ribosomal subunit.

In terms of biological role, one of the primary rRNA binding proteins, this protein initially binds near the 5'-end of the 23S rRNA. It is important during the early stages of 50S assembly. It makes multiple contacts with different domains of the 23S rRNA in the assembled 50S subunit and ribosome. Forms part of the polypeptide exit tunnel. This chain is Large ribosomal subunit protein uL4, found in Bifidobacterium adolescentis (strain ATCC 15703 / DSM 20083 / NCTC 11814 / E194a).